A 500-amino-acid polypeptide reads, in one-letter code: Tektin-like protein 1 (500 aa).

A coiled-coil region spans residues 198 to 229 (MLTWEKEELKSMKRKMEADMEKSEALLKTLAS). The residue at position 372 (Tyr-372) is a Phosphotyrosine. Positions 420-444 (DKLQRHISHVEKNLDELLSMRKKLT) form a coiled coil.

Microtubule inner protein component of sperm flagellar doublet microtubules.

It is found in the cytoplasm. Its subcellular location is the cytoskeleton. The protein localises to the flagellum axoneme. Its function is as follows. Microtubule inner protein (MIP) part of the dynein-decorated doublet microtubules (DMTs) in sperm flagellar axoneme, which is required for motile flagellum beating. Forms an extensive interaction network cross-linking the lumen of axonemal doublet microtubules. This Bos taurus (Bovine) protein is Tektin-like protein 1.